The chain runs to 335 residues: Fructose-1,6-bisphosphatase class 1 (335 aa).

Glu92, Asp114, Leu116, and Asp117 together coordinate Mg(2+). Substrate contacts are provided by residues 117-120 (DGSS) and Asn209. Glu281 is a binding site for Mg(2+).

This sequence belongs to the FBPase class 1 family. As to quaternary structure, homotetramer. Mg(2+) is required as a cofactor.

It is found in the cytoplasm. The catalysed reaction is beta-D-fructose 1,6-bisphosphate + H2O = beta-D-fructose 6-phosphate + phosphate. It functions in the pathway carbohydrate biosynthesis; gluconeogenesis. This is Fructose-1,6-bisphosphatase class 1 from Nitrosococcus oceani (strain ATCC 19707 / BCRC 17464 / JCM 30415 / NCIMB 11848 / C-107).